The following is a 137-amino-acid chain: Large-conductance mechanosensitive channel (137 aa).

2 consecutive transmembrane segments (helical) span residues 14 to 34 (VLDLAVGVIIGAAFTAIINSL) and 81 to 101 (GSFLNAVINFLLVAFVIFLIV).

The protein belongs to the MscL family. Homopentamer.

It is found in the cell membrane. Channel that opens in response to stretch forces in the membrane lipid bilayer. May participate in the regulation of osmotic pressure changes within the cell. The chain is Large-conductance mechanosensitive channel from Chloroflexus aggregans (strain MD-66 / DSM 9485).